The chain runs to 921 residues: TRPM8 channel-associated factor 1 (921 aa).

Positions 542 to 841 (YCWMSTGLYI…TYLQLQEAFG (300 aa)) constitute a Peptidase M60 domain.

This sequence belongs to the TCAF family. In terms of assembly, interacts with TRPM8 (via N-terminus and C-terminus domains); the interaction inhibits TRPM8 channel activity. Interacts with TRPV6.

It is found in the cell membrane. In terms of biological role, positively regulates the plasma membrane cation channel TRPM8 activity. Involved in the recruitment of TRPM8 to the cell surface. Promotes prostate cancer cell migration inhibition in a TRPM8-dependent manner. In Pongo abelii (Sumatran orangutan), this protein is TRPM8 channel-associated factor 1.